The following is a 654-amino-acid chain: Glutamyl-tRNA(Gln) amidotransferase subunit B, mitochondrial (654 aa).

The N-terminal 8 residues, 1 to 8 (MGRIPTRE), are a transit peptide targeting the mitochondrion. The disordered stretch occupies residues 79–101 (DQAKASKAQAKGKKKRSSADNQT).

This sequence belongs to the GatB/GatE family. GatB subfamily. Subunit of the heterotrimeric GatCAB amidotransferase (AdT) complex, composed of A, B and C subunits.

Its subcellular location is the mitochondrion. It catalyses the reaction L-glutamyl-tRNA(Gln) + L-glutamine + ATP + H2O = L-glutaminyl-tRNA(Gln) + L-glutamate + ADP + phosphate + H(+). Functionally, allows the formation of correctly charged Gln-tRNA(Gln) through the transamidation of misacylated Glu-tRNA(Gln) in the mitochondria. The reaction takes place in the presence of glutamine and ATP through an activated gamma-phospho-Glu-tRNA(Gln). The chain is Glutamyl-tRNA(Gln) amidotransferase subunit B, mitochondrial from Pyricularia oryzae (strain 70-15 / ATCC MYA-4617 / FGSC 8958) (Rice blast fungus).